The following is a 311-amino-acid chain: Homeobox-leucine zipper protein HOX1 (311 aa).

2 disordered regions span residues 29–69 (AGGA…SDHR) and 97–160 (AETT…KKLR). Residues 119 to 145 (SSPNSTLSSLSGKRGAPSAATAAAAAA) show a composition bias toward low complexity. A DNA-binding region (homeobox) is located at residues 154–213 (GSRKKLRLSKDQAAVLEDTFKEHNTLNPKQKAALARQLNLKPRQVEVWFQNRRARTKLKQ). A leucine-zipper region spans residues 212–256 (KQTEVDCELLKRCCETLTDENRRLHRELQELRALKLATAAAAPHH). A disordered region spans residues 279–311 (SAATTTRNNSGAAPARPVPTRPWPPAAAQRSSA). A compositionally biased stretch (polar residues) spans 280–289 (AATTTRNNSG). The segment covering 294 to 303 (RPVPTRPWPP) has biased composition (pro residues).

It belongs to the HD-ZIP homeobox family. Class II subfamily. As to quaternary structure, homodimer. May form a heterodimer with HOX2, HOX3 or HOX7. Expressed in root provascular and vascular cylinder, provascular and vascular strands of leaves, provascular and vascular strands of the whole panicle, in mature embryo provascular bundles of scutellum and embryonic axis and provascular and vascular strands of young immature spikelet organs. Expressed in differentiating and differentiated xylem and phloem elements, and in outer and inner bundle sheath cells of all vascular bundles. Expressed in auricles, ligules, culm, guard cells brac hairs and pollen.

It is found in the nucleus. Probable transcription repressor involved leaf development. Binds to the DNA sequence 5'-CAAT[GC]ATTG-3'. May act as a regulatory switch to specify provascular cell fate. This chain is Homeobox-leucine zipper protein HOX1 (HOX1), found in Oryza sativa subsp. japonica (Rice).